A 183-amino-acid polypeptide reads, in one-letter code: Nucleoplasmin-like protein NO29 (183 aa).

The segment covering 126–166 (SDDEDLSGSEEEMEDEEEEEDDDDDDDDDDDDDDDDDEEEI) has biased composition (acidic residues). A disordered region spans residues 126–183 (SDDEDLSGSEEEMEDEEEEEDDDDDDDDDDDDDDDDDEEEITPIKPAKKPLKTLSRTF).

Belongs to the nucleoplasmin family.

It is found in the nucleus. The protein localises to the nucleolus. This is Nucleoplasmin-like protein NO29 from Xenopus laevis (African clawed frog).